The chain runs to 305 residues: Acetylglutamate kinase (305 aa).

Substrate contacts are provided by residues 67–68, Arg-89, and Asn-190; that span reads GG.

The protein belongs to the acetylglutamate kinase family. ArgB subfamily.

The protein localises to the cytoplasm. The catalysed reaction is N-acetyl-L-glutamate + ATP = N-acetyl-L-glutamyl 5-phosphate + ADP. The protein operates within amino-acid biosynthesis; L-arginine biosynthesis; N(2)-acetyl-L-ornithine from L-glutamate: step 2/4. In terms of biological role, catalyzes the ATP-dependent phosphorylation of N-acetyl-L-glutamate. This is Acetylglutamate kinase from Bifidobacterium animalis subsp. lactis (strain AD011).